Here is a 141-residue protein sequence, read N- to C-terminus: Large ribosomal subunit protein uL16 (141 aa).

Belongs to the universal ribosomal protein uL16 family. As to quaternary structure, part of the 50S ribosomal subunit.

In terms of biological role, binds 23S rRNA and is also seen to make contacts with the A and possibly P site tRNAs. The sequence is that of Large ribosomal subunit protein uL16 from Campylobacter concisus (strain 13826).